Here is a 516-residue protein sequence, read N- to C-terminus: Probable cytochrome P450 9f2 (516 aa).

Cysteine 460 provides a ligand contact to heme.

The protein belongs to the cytochrome P450 family. Heme serves as cofactor.

Its subcellular location is the endoplasmic reticulum membrane. The protein localises to the microsome membrane. In terms of biological role, may be involved in the metabolism of insect hormones and in the breakdown of synthetic insecticides. The polypeptide is Probable cytochrome P450 9f2 (Cyp9f2) (Drosophila melanogaster (Fruit fly)).